Here is a 91-residue protein sequence, read N- to C-terminus: N(2)-fixation sustaining protein CowN (91 aa).

This sequence belongs to the CowN family.

Its function is as follows. Is required to sustain N(2)-dependent growth in the presence of low levels of carbon monoxide (CO). Probably acts by protecting the N(2) fixation ability of the nitrogenase complex, which is inactivated in the presence of CO. The polypeptide is N(2)-fixation sustaining protein CowN (Beijerinckia indica subsp. indica (strain ATCC 9039 / DSM 1715 / NCIMB 8712)).